The sequence spans 333 residues: Fructose-1,6-bisphosphatase class 1 (333 aa).

Positions 89, 110, 112, and 113 each coordinate Mg(2+). Residues 113 to 116 (DGSS), Asn206, Tyr239, 257 to 259 (YLY), and Lys269 each bind substrate. Residue Glu275 coordinates Mg(2+).

This sequence belongs to the FBPase class 1 family. In terms of assembly, homotetramer. Mg(2+) serves as cofactor.

The protein localises to the cytoplasm. It catalyses the reaction beta-D-fructose 1,6-bisphosphate + H2O = beta-D-fructose 6-phosphate + phosphate. It participates in carbohydrate biosynthesis; gluconeogenesis. This is Fructose-1,6-bisphosphatase class 1 from Sodalis glossinidius (strain morsitans).